The chain runs to 268 residues: MKAKKKWGQNFIFDKNLLSKIVRASGVGEEDFVLEVGTGHGGLTEELAKKVKKVVSFEIDKELFEMSREKLKIYKNVVIINEDILEVDLLEIAQEHFDGNSFKVVANLPYYITSPIIMKMLDCKLVKEMTVLVQKEVAERICALPGTKDYGMLTVFVNFKAKPEILFNLPPKVFVPPPKVESSLLKLKVYDKPLVEVKDEKLFSEVVRAAFGQRRKVLSNSLKVLGFSKEVLHETLLKVGISPQARGETLSIDQFANLANALYLLIKE.

The S-adenosyl-L-methionine site is built by Asn10, Ile12, Gly37, Glu58, Asp83, and Asn107.

This sequence belongs to the class I-like SAM-binding methyltransferase superfamily. rRNA adenine N(6)-methyltransferase family. RsmA subfamily.

It is found in the cytoplasm. The enzyme catalyses adenosine(1518)/adenosine(1519) in 16S rRNA + 4 S-adenosyl-L-methionine = N(6)-dimethyladenosine(1518)/N(6)-dimethyladenosine(1519) in 16S rRNA + 4 S-adenosyl-L-homocysteine + 4 H(+). Specifically dimethylates two adjacent adenosines (A1518 and A1519) in the loop of a conserved hairpin near the 3'-end of 16S rRNA in the 30S particle. May play a critical role in biogenesis of 30S subunits. In Caldanaerobacter subterraneus subsp. tengcongensis (strain DSM 15242 / JCM 11007 / NBRC 100824 / MB4) (Thermoanaerobacter tengcongensis), this protein is Ribosomal RNA small subunit methyltransferase A.